A 646-amino-acid chain; its full sequence is uncharacterized protein (646 aa).

10 consecutive transmembrane segments (helical) span residues 20-40, 54-74, 115-135, 154-174, 203-223, 232-252, 285-305, 523-543, 582-602, and 613-633; these read AYFL…SFIF, LVKT…IFFI, LAAI…FFMI, AFVM…ILSL, TVLS…ANAI, ILIL…VAFF, LFLT…IYMF, GVAL…IVQG, IGFL…FAYA, and FLEA…YYIV.

It belongs to the ABC-4 integral membrane protein family.

The protein localises to the cell membrane. This is an uncharacterized protein from Bacillus subtilis (strain 168).